We begin with the raw amino-acid sequence, 94 residues long: Acylphosphatase (94 aa).

The Acylphosphatase-like domain maps to 3–90 (RVHVIVEGRV…SDEKQFRIMY (88 aa)). Catalysis depends on residues arginine 18 and asparagine 36.

The protein belongs to the acylphosphatase family.

The catalysed reaction is an acyl phosphate + H2O = a carboxylate + phosphate + H(+). In Geobacillus kaustophilus (strain HTA426), this protein is Acylphosphatase (acyP).